The following is a 422-amino-acid chain: Signal recognition particle receptor FtsY (422 aa).

Residues Pro-39–Arg-86 are disordered. The span at Tyr-50 to Pro-66 shows a compositional bias: polar residues. GTP is bound by residues Gly-230–Thr-237, Asp-312–Arg-316, and Thr-374–Asp-377.

Belongs to the GTP-binding SRP family. FtsY subfamily. As to quaternary structure, part of the signal recognition particle protein translocation system, which is composed of SRP and FtsY.

It localises to the cell membrane. The protein localises to the cytoplasm. The catalysed reaction is GTP + H2O = GDP + phosphate + H(+). Involved in targeting and insertion of nascent membrane proteins into the cytoplasmic membrane. Acts as a receptor for the complex formed by the signal recognition particle (SRP) and the ribosome-nascent chain (RNC). This is Signal recognition particle receptor FtsY from Mycobacterium bovis (strain ATCC BAA-935 / AF2122/97).